The chain runs to 89 residues: Small ribosomal subunit protein uS15 (89 aa).

It belongs to the universal ribosomal protein uS15 family. In terms of assembly, part of the 30S ribosomal subunit. Forms a bridge to the 50S subunit in the 70S ribosome, contacting the 23S rRNA.

Functionally, one of the primary rRNA binding proteins, it binds directly to 16S rRNA where it helps nucleate assembly of the platform of the 30S subunit by binding and bridging several RNA helices of the 16S rRNA. In terms of biological role, forms an intersubunit bridge (bridge B4) with the 23S rRNA of the 50S subunit in the ribosome. The polypeptide is Small ribosomal subunit protein uS15 (Acinetobacter baylyi (strain ATCC 33305 / BD413 / ADP1)).